Consider the following 64-residue polypeptide: Large ribosomal subunit protein bL35 (64 aa).

Positions 1-23 (MPKMKTHRGAAKRFKKTKNKIKR) are disordered.

This sequence belongs to the bacterial ribosomal protein bL35 family.

This Nitratiruptor sp. (strain SB155-2) protein is Large ribosomal subunit protein bL35.